The sequence spans 256 residues: Transmembrane protein 187 (256 aa).

7 consecutive transmembrane segments (helical) span residues 8–28 (ALFH…TGIF), 51–71 (FLAM…GVYW), 94–112 (VFAG…RIGM), 119–139 (VLDQ…CLCL), 146–168 (WLFL…HPHG), 193–213 (NISS…FVVL), and 233–253 (FWSK…LTSL).

It is found in the membrane. In Bos taurus (Bovine), this protein is Transmembrane protein 187 (TMEM187).